The sequence spans 140 residues: Putative septation protein SpoVG (140 aa).

Residues 88 to 127 (VAPQAGGLQGAEEPTAVEPAPQLQDESELPWEPGDDGEGA) are disordered. A compositionally biased stretch (acidic residues) spans 112-124 (DESELPWEPGDDG).

The protein belongs to the SpoVG family.

Could be involved in septation. The chain is Putative septation protein SpoVG from Symbiobacterium thermophilum (strain DSM 24528 / JCM 14929 / IAM 14863 / T).